The sequence spans 206 residues: ATP synthase subunit b (206 aa).

A helical transmembrane segment spans residues 10 to 30; sequence LLKPFVSTAAICLLVAGTVVL.

This sequence belongs to the ATPase B chain family. F-type ATPases have 2 components, F(1) - the catalytic core - and F(0) - the membrane proton channel. F(1) has five subunits: alpha(3), beta(3), gamma(1), delta(1), epsilon(1). F(0) has three main subunits: a(1), b(2) and c(10-14). The alpha and beta chains form an alternating ring which encloses part of the gamma chain. F(1) is attached to F(0) by a central stalk formed by the gamma and epsilon chains, while a peripheral stalk is formed by the delta and b chains.

The protein localises to the cell inner membrane. Its function is as follows. F(1)F(0) ATP synthase produces ATP from ADP in the presence of a proton or sodium gradient. F-type ATPases consist of two structural domains, F(1) containing the extramembraneous catalytic core and F(0) containing the membrane proton channel, linked together by a central stalk and a peripheral stalk. During catalysis, ATP synthesis in the catalytic domain of F(1) is coupled via a rotary mechanism of the central stalk subunits to proton translocation. Component of the F(0) channel, it forms part of the peripheral stalk, linking F(1) to F(0). The chain is ATP synthase subunit b from Geobacter sulfurreducens (strain ATCC 51573 / DSM 12127 / PCA).